The primary structure comprises 448 residues: 26S proteasome regulatory subunit 4 homolog (448 aa).

The span at 1–10 (MGQAQSGNFS) shows a compositional bias: polar residues. Positions 1–58 (MGQAQSGNFSNFGDGANGDNKKDQKKDKPKYEPPVPTRTGRRKKKAQSGPDASAKLPT) are disordered. The segment covering 19-31 (DNKKDQKKDKPKY) has biased composition (basic and acidic residues). 232 to 239 (GAPGTGKT) serves as a coordination point for ATP.

The protein belongs to the AAA ATPase family.

It is found in the cytoplasm. It localises to the nucleus. Its function is as follows. The 26S proteasome is involved in the ATP-dependent degradation of ubiquitinated proteins. The regulatory (or ATPase) complex confers ATP dependency and substrate specificity to the 26S complex. The chain is 26S proteasome regulatory subunit 4 homolog (mts2) from Schizosaccharomyces pombe (strain 972 / ATCC 24843) (Fission yeast).